A 619-amino-acid polypeptide reads, in one-letter code: Translation initiation factor IF-2 (619 aa).

Positions 120 to 289 (PRPPIVTIMG…ILLLGEVEGY (170 aa)) constitute a tr-type G domain. Residues 129-136 (GHVDHGKT) form a G1 region. Residue 129–136 (GHVDHGKT) coordinates GTP. Residues 154–158 (GITQK) form a G2 region. The G3 stretch occupies residues 176–179 (DTPG). Residues 176–180 (DTPGH) and 230–233 (NKMD) contribute to the GTP site. Positions 230–233 (NKMD) are G4. The interval 266 to 268 (SAL) is G5.

The protein belongs to the TRAFAC class translation factor GTPase superfamily. Classic translation factor GTPase family. IF-2 subfamily.

It is found in the cytoplasm. Functionally, one of the essential components for the initiation of protein synthesis. Protects formylmethionyl-tRNA from spontaneous hydrolysis and promotes its binding to the 30S ribosomal subunits. Also involved in the hydrolysis of GTP during the formation of the 70S ribosomal complex. The chain is Translation initiation factor IF-2 (infB) from Mycoplasma genitalium (strain ATCC 33530 / DSM 19775 / NCTC 10195 / G37) (Mycoplasmoides genitalium).